The primary structure comprises 141 residues: Large ribosomal subunit protein uL11 (141 aa).

It belongs to the universal ribosomal protein uL11 family. Part of the ribosomal stalk of the 50S ribosomal subunit. Interacts with L10 and the large rRNA to form the base of the stalk. L10 forms an elongated spine to which L12 dimers bind in a sequential fashion forming a multimeric L10(L12)X complex. One or more lysine residues are methylated.

In terms of biological role, forms part of the ribosomal stalk which helps the ribosome interact with GTP-bound translation factors. The chain is Large ribosomal subunit protein uL11 from Streptococcus agalactiae serotype Ia (strain ATCC 27591 / A909 / CDC SS700).